The primary structure comprises 607 residues: Thymidine kinase (607 aa).

Disordered regions lie at residues 1-160 (MAGF…ADST) and 180-215 (DDKS…PSGL). Basic and acidic residues predominate over residues 17-32 (KCQEDESPENERHENF). 3 stretches are compositionally biased toward polar residues: residues 88–106 (AAVT…TSCP), 148–160 (RKTS…ADST), and 194–203 (RRPSSHSALK). An ATP-binding site is contributed by 291–298 (GAPGVGKT). E317 serves as the catalytic Proton acceptor. Q355 contacts substrate. Residue R445 coordinates ATP. R451 serves as a coordination point for substrate.

It belongs to the herpesviridae thymidine kinase family. In terms of assembly, homodimer.

The protein resides in the virion tegument. It is found in the host nucleus. It catalyses the reaction thymidine + ATP = dTMP + ADP + H(+). Its function is as follows. Catalyzes the transfer of the gamma-phospho group of ATP to thymidine to generate dTMP in the salvage pathway of pyrimidine synthesis. The dTMP serves as a substrate for DNA polymerase during viral DNA replication. Allows the virus to be reactivated and to grow in non-proliferative cells lacking a high concentration of phosphorylated nucleic acid precursors. The polypeptide is Thymidine kinase (Epstein-Barr virus (strain AG876) (HHV-4)).